We begin with the raw amino-acid sequence, 863 residues long: DNA mismatch repair protein MutS (863 aa).

607–614 is a binding site for ATP; that stretch reads GPNMAGKS.

It belongs to the DNA mismatch repair MutS family.

In terms of biological role, this protein is involved in the repair of mismatches in DNA. It is possible that it carries out the mismatch recognition step. This protein has a weak ATPase activity. This is DNA mismatch repair protein MutS from Caldicellulosiruptor saccharolyticus (strain ATCC 43494 / DSM 8903 / Tp8T 6331).